Here is a 360-residue protein sequence, read N- to C-terminus: Phosphoserine aminotransferase (360 aa).

Arginine 42 provides a ligand contact to L-glutamate. 4 residues coordinate pyridoxal 5'-phosphate: tryptophan 102, threonine 152, aspartate 171, and glutamine 194. Lysine 195 is subject to N6-(pyridoxal phosphate)lysine. 237-238 is a binding site for pyridoxal 5'-phosphate; it reads NT.

This sequence belongs to the class-V pyridoxal-phosphate-dependent aminotransferase family. SerC subfamily. Homodimer. Requires pyridoxal 5'-phosphate as cofactor.

The protein localises to the cytoplasm. The catalysed reaction is O-phospho-L-serine + 2-oxoglutarate = 3-phosphooxypyruvate + L-glutamate. The enzyme catalyses 4-(phosphooxy)-L-threonine + 2-oxoglutarate = (R)-3-hydroxy-2-oxo-4-phosphooxybutanoate + L-glutamate. The protein operates within amino-acid biosynthesis; L-serine biosynthesis; L-serine from 3-phospho-D-glycerate: step 2/3. Its pathway is cofactor biosynthesis; pyridoxine 5'-phosphate biosynthesis; pyridoxine 5'-phosphate from D-erythrose 4-phosphate: step 3/5. Functionally, catalyzes the reversible conversion of 3-phosphohydroxypyruvate to phosphoserine and of 3-hydroxy-2-oxo-4-phosphonooxybutanoate to phosphohydroxythreonine. The protein is Phosphoserine aminotransferase of Coxiella burnetii (strain Dugway 5J108-111).